Here is a 2365-residue protein sequence, read N- to C-terminus: TRIO and F-actin-binding protein (2365 aa).

Disordered stretches follow at residues 48-1106 (VPYC…HEPL), 1168-1554 (HRDA…SERR), 1593-1667 (LPRK…WPKI), and 1679-1751 (AGLE…TSWR). The span at 132–151 (SDPTSSPDSATPDDTSNSSS) shows a compositional bias: low complexity. A Phosphothreonine modification is found at His-221. Polar residues-rich tracts occupy residues 239–271 (TLTQASSMTPHSGPRSTTSQASPAQRDTAQAAS), 291–375 (RASS…TPQR), 403–422 (RTSCAQRDNPKASRTSSPNR), 429–471 (RTSC…SPNR), 478–520 (RTSC…SPNR), 527–569 (RTSC…SPNR), 576–618 (RTSC…SPNR), 625–650 (RTSCAQRDNPRASSPNRTTQQDSPRT), 661–674 (SSPNRTIQQENPRT), 683–701 (RASSPSRTIQQENPRTSCA), 709–722 (SSPNRTTQQENPRT), 745–785 (RTSC…SPNR), and 807–837 (IRATQQDNPRTCIQQNIPRSSSTQQDNPKTS). An essentiel for its aggregation region spans residues 324–348 (STQEDTPRASSTQWNTPRASSPSRS). The residue at position 457 (Gln-457) is a Phosphothreonine. Positions 839–854 (TKRDNLRPTCTQRDRT) are enriched in basic and acidic residues. Composition is skewed to polar residues over residues 855 to 898 (QSFS…SSPH), 913 to 927 (PTQSDGPRTSSPSRS), and 945 to 994 (DRPQ…TSSP). The segment covering 1045 to 1056 (RAPESEPPHHEP) has biased composition (basic and acidic residues). The segment covering 1195–1206 (SMESLAPSTDSL) has biased composition (polar residues). 2 stretches are compositionally biased toward basic and acidic residues: residues 1260–1270 (ETRHNLEREEY) and 1303–1319 (GRAEVERLFGQERRKSE). Positions 1332-1349 (SQQPSQGQSQLLRRQSSP) are enriched in low complexity. Basic and acidic residues-rich tracts occupy residues 1378 to 1387 (SPEKRPEGDR) and 1402 to 1411 (TPERELRTQR). The span at 1452–1461 (GGLGPGGWWG) shows a compositional bias: gly residues. Positions 1494-1508 (WEEKPTHELPRELGK) are enriched in basic and acidic residues. Positions 1524–1534 (ESSQSWHSGTP) are enriched in polar residues. A compositionally biased stretch (basic and acidic residues) spans 1594–1606 (PRKDPAGHRDDLA). Residues 1645–1664 (ALQSQSPVQLPSPACTSTQW) show a composition bias toward polar residues. Residues 1696–1705 (PSLPELQFQP) show a composition bias toward low complexity. A compositionally biased stretch (basic and acidic residues) spans 1724–1735 (KQADSADKRPAE). Residues 1778-1887 (LNFKKGWMSI…WIEALRKTVR (110 aa)) enclose the PH domain. Ser-1796 is modified (phosphoserine). Disordered regions lie at residues 1889–2017 (TSAP…LTED) and 2174–2194 (LSKTRSLQQGPDGLRKQHQSD). Omega-N-methylarginine is present on Arg-1930. Ser-1949 and Ser-1955 each carry phosphoserine. Residues 1965–1997 (TPDRLAKQEELERDLAQRSEERRKWFEATDSRT) show a composition bias toward basic and acidic residues. Coiled-coil stretches lie at residues 2062-2247 (SDGH…NQEL) and 2281-2361 (ELEV…SMRN).

Isoform 1 forms aggregates. Isoform 1 binds to TRIO and F-actin. Isoform 1 may also interact with myosin II. Interacts with HECTD3. Interacts with PJVK. Interacts with TERF1; mediates TERF1 localization to the centrosome. Ubiquitinated by HECTD3, leading to its degradation by the proteasome. In terms of processing, phosphorylation at Thr-457 by PLK1 ensures mitotic progression and is essential for accurate chromosome segregation. Phosphorylation at residues Thr-221 and Thr-457 by kinase NEK2A and PLK1 coordinates TERF1 translocation from telomere to spindle pole. In terms of tissue distribution, widely expressed. Highly expressed in heart and placenta. As to expression, expressed in fetal brain, retina and cochlea but is not detectable in the other tissues.

It is found in the nucleus. The protein resides in the cytoplasm. Its subcellular location is the cytoskeleton. It localises to the microtubule organizing center. The protein localises to the centrosome. It is found in the midbody. The protein resides in the chromosome. Its subcellular location is the telomere. Regulates actin cytoskeletal organization, cell spreading and cell contraction by directly binding and stabilizing filamentous F-actin and prevents its depolymerization. May also serve as a linker protein to recruit proteins required for F-actin formation and turnover. Essential for correct mitotic progression. Its function is as follows. Plays a pivotal role in the formation of stereocilia rootlets. In Homo sapiens (Human), this protein is TRIO and F-actin-binding protein (TRIOBP).